Consider the following 363-residue polypeptide: Chalcone synthase B (363 aa).

Residue cysteine 170 is part of the active site.

The protein belongs to the thiolase-like superfamily. Chalcone/stilbene synthases family.

It carries out the reaction (E)-4-coumaroyl-CoA + 3 malonyl-CoA + 3 H(+) = 2',4,4',6'-tetrahydroxychalcone + 3 CO2 + 4 CoA. Its pathway is secondary metabolite biosynthesis; flavonoid biosynthesis. Functionally, the primary product of this enzyme is 4,2',4',6'-tetrahydroxychalcone (also termed naringenin-chalcone or chalcone) which can under specific conditions spontaneously isomerize into naringenin. This chain is Chalcone synthase B (CHSB), found in Ipomoea cordatotriloba (Tievine).